A 160-amino-acid chain; its full sequence is SsrA-binding protein (160 aa).

The tract at residues Leu130–Val160 is disordered. Basic and acidic residues predominate over residues Lys139–Arg150. Basic residues predominate over residues Gln151 to Val160.

This sequence belongs to the SmpB family.

The protein localises to the cytoplasm. Its function is as follows. Required for rescue of stalled ribosomes mediated by trans-translation. Binds to transfer-messenger RNA (tmRNA), required for stable association of tmRNA with ribosomes. tmRNA and SmpB together mimic tRNA shape, replacing the anticodon stem-loop with SmpB. tmRNA is encoded by the ssrA gene; the 2 termini fold to resemble tRNA(Ala) and it encodes a 'tag peptide', a short internal open reading frame. During trans-translation Ala-aminoacylated tmRNA acts like a tRNA, entering the A-site of stalled ribosomes, displacing the stalled mRNA. The ribosome then switches to translate the ORF on the tmRNA; the nascent peptide is terminated with the 'tag peptide' encoded by the tmRNA and targeted for degradation. The ribosome is freed to recommence translation, which seems to be the essential function of trans-translation. The polypeptide is SsrA-binding protein (Alkalilimnicola ehrlichii (strain ATCC BAA-1101 / DSM 17681 / MLHE-1)).